The sequence spans 529 residues: Bifunctional purine biosynthesis protein PurH (529 aa).

The region spanning threonine 2 to threonine 149 is the MGS-like domain.

Belongs to the PurH family.

It carries out the reaction (6R)-10-formyltetrahydrofolate + 5-amino-1-(5-phospho-beta-D-ribosyl)imidazole-4-carboxamide = 5-formamido-1-(5-phospho-D-ribosyl)imidazole-4-carboxamide + (6S)-5,6,7,8-tetrahydrofolate. It catalyses the reaction IMP + H2O = 5-formamido-1-(5-phospho-D-ribosyl)imidazole-4-carboxamide. Its pathway is purine metabolism; IMP biosynthesis via de novo pathway; 5-formamido-1-(5-phospho-D-ribosyl)imidazole-4-carboxamide from 5-amino-1-(5-phospho-D-ribosyl)imidazole-4-carboxamide (10-formyl THF route): step 1/1. The protein operates within purine metabolism; IMP biosynthesis via de novo pathway; IMP from 5-formamido-1-(5-phospho-D-ribosyl)imidazole-4-carboxamide: step 1/1. This chain is Bifunctional purine biosynthesis protein PurH, found in Cereibacter sphaeroides (strain ATCC 17029 / ATH 2.4.9) (Rhodobacter sphaeroides).